The following is a 132-amino-acid chain: Putative RNase AF_0947 (132 aa).

Catalysis depends on residues Arg-91 and His-96. The RX(4)HXY motif motif lies at 91 to 98 (RNAIAHHY). O-di-AMP-tyrosine is present on Tyr-98.

Belongs to the HepT RNase toxin family. Homodimer, probably forms a complex with cognate antitoxin AF_0948. Post-translationally, modified by cognate antitoxin AF_0948; probably at least 2 successive AMPylation events occur on Tyr-98.

Functionally, probable toxic component of a putative type VII toxin-antitoxin (TA) system, probably an RNase. Probably neutralized by cognate antitoxin AF_0948. Neutralization may be due to AMPylation by AF_0948. The sequence is that of Putative RNase AF_0947 from Archaeoglobus fulgidus (strain ATCC 49558 / DSM 4304 / JCM 9628 / NBRC 100126 / VC-16).